The primary structure comprises 349 residues: MDIKSALSRIVGHLDLSTEEMRDVMRQIMTGQCSEAQIGAFLMGMRMKSESIDEIVGAVSVMRELADKVELKSLDGVVDIVGTGGDGANIFNVSTASAFVIAAAGCTVAKHGNRAVSGKSGSADLLEAAGIYLNLTPVQVARCIDSLGIGFMFAQTHHSAMKHAAGPRRDLGLRTLFNMLGPLTNPAGVKHQVVGVFTQALCRPLAEVLQRLGSKHVLVVHSKDGLDEFSLAAPTFVAELKNDQITEYWVEPEDLGMKSQSLHGLAVEGPQASLELIRDALGRRKTENGQKAAEMIVLNAGAALYAADHAMTLAQGVELAHDVLHTGLAWEKLQELGAFTAVFKVENEA.

5-phospho-alpha-D-ribose 1-diphosphate contacts are provided by residues Gly-82, 85-86 (GD), 92-95 (NVST), 110-118 (KHGNRAVSG), and Ser-122. An anthranilate-binding site is contributed by Gly-82. Ser-94 lines the Mg(2+) pocket. Asn-113 serves as a coordination point for anthranilate. Arg-168 serves as a coordination point for anthranilate. Mg(2+)-binding residues include Asp-227 and Glu-228.

Belongs to the anthranilate phosphoribosyltransferase family. Homodimer. It depends on Mg(2+) as a cofactor.

The catalysed reaction is N-(5-phospho-beta-D-ribosyl)anthranilate + diphosphate = 5-phospho-alpha-D-ribose 1-diphosphate + anthranilate. It participates in amino-acid biosynthesis; L-tryptophan biosynthesis; L-tryptophan from chorismate: step 2/5. In terms of biological role, catalyzes the transfer of the phosphoribosyl group of 5-phosphorylribose-1-pyrophosphate (PRPP) to anthranilate to yield N-(5'-phosphoribosyl)-anthranilate (PRA). This is Anthranilate phosphoribosyltransferase from Pseudomonas entomophila (strain L48).